A 513-amino-acid chain; its full sequence is Na(+)/H(+) antiporter NhaB (513 aa).

12 helical membrane-spanning segments follow: residues 23-43 (LALI…PFVA), 52-72 (IFTL…LLAI), 97-117 (LLLM…LFIF), 120-140 (LLLS…AAAF), 144-164 (FLDA…FYGI), 202-222 (LMMH…VGEP), 238-258 (FFLR…LTCL), 303-323 (AIIG…VGLI), 348-368 (TESL…AVII), 391-411 (LFYI…VGTI), 447-467 (ATPN…APLI), and 475-495 (VWMA…CVEF).

This sequence belongs to the NhaB Na(+)/H(+) (TC 2.A.34) antiporter family.

It localises to the cell inner membrane. The enzyme catalyses 2 Na(+)(in) + 3 H(+)(out) = 2 Na(+)(out) + 3 H(+)(in). Na(+)/H(+) antiporter that extrudes sodium in exchange for external protons. This Escherichia coli O6:H1 (strain CFT073 / ATCC 700928 / UPEC) protein is Na(+)/H(+) antiporter NhaB.